The chain runs to 429 residues: Gamma-glutamyl phosphate reductase (429 aa).

Belongs to the gamma-glutamyl phosphate reductase family.

It localises to the cytoplasm. It carries out the reaction L-glutamate 5-semialdehyde + phosphate + NADP(+) = L-glutamyl 5-phosphate + NADPH + H(+). Its pathway is amino-acid biosynthesis; L-proline biosynthesis; L-glutamate 5-semialdehyde from L-glutamate: step 2/2. In terms of biological role, catalyzes the NADPH-dependent reduction of L-glutamate 5-phosphate into L-glutamate 5-semialdehyde and phosphate. The product spontaneously undergoes cyclization to form 1-pyrroline-5-carboxylate. This chain is Gamma-glutamyl phosphate reductase, found in Methylocella silvestris (strain DSM 15510 / CIP 108128 / LMG 27833 / NCIMB 13906 / BL2).